An 83-amino-acid chain; its full sequence is Putative snRNP Sm-like protein (83 aa).

The Sm domain occupies 9–81 (KPMDVLKNAL…VIFVSPSKGD (73 aa)).

The protein belongs to the snRNP Sm proteins family.

The sequence is that of Putative snRNP Sm-like protein from Thermoplasma volcanium (strain ATCC 51530 / DSM 4299 / JCM 9571 / NBRC 15438 / GSS1).